A 383-amino-acid chain; its full sequence is 8-amino-7-oxononanoate synthase (383 aa).

Substrate is bound at residue Arg23. 110–111 (GF) serves as a coordination point for pyridoxal 5'-phosphate. His135 serves as a coordination point for substrate. Pyridoxal 5'-phosphate-binding residues include Ser181, His209, and Thr235. Lys238 is subject to N6-(pyridoxal phosphate)lysine. Thr351 is a substrate binding site.

This sequence belongs to the class-II pyridoxal-phosphate-dependent aminotransferase family. BioF subfamily. In terms of assembly, homodimer. It depends on pyridoxal 5'-phosphate as a cofactor.

The catalysed reaction is 6-carboxyhexanoyl-[ACP] + L-alanine + H(+) = (8S)-8-amino-7-oxononanoate + holo-[ACP] + CO2. It participates in cofactor biosynthesis; biotin biosynthesis. In terms of biological role, catalyzes the decarboxylative condensation of pimeloyl-[acyl-carrier protein] and L-alanine to produce 8-amino-7-oxononanoate (AON), [acyl-carrier protein], and carbon dioxide. This is 8-amino-7-oxononanoate synthase from Aliivibrio fischeri (strain MJ11) (Vibrio fischeri).